Here is a 207-residue protein sequence, read N- to C-terminus: Outer-membrane lipoprotein LolB (207 aa).

An N-terminal signal peptide occupies residues 1-21 (MPLPDFRFIRLLPLAALVLTA). The N-palmitoyl cysteine moiety is linked to residue C22. C22 carries S-diacylglycerol cysteine lipidation.

This sequence belongs to the LolB family. In terms of assembly, monomer.

The protein resides in the cell outer membrane. In terms of biological role, plays a critical role in the incorporation of lipoproteins in the outer membrane after they are released by the LolA protein. The sequence is that of Outer-membrane lipoprotein LolB from Escherichia coli O6:H1 (strain CFT073 / ATCC 700928 / UPEC).